The chain runs to 1342 residues: DNA-directed RNA polymerase subunit beta (1342 aa).

This sequence belongs to the RNA polymerase beta chain family. As to quaternary structure, the RNAP catalytic core consists of 2 alpha, 1 beta, 1 beta' and 1 omega subunit. When a sigma factor is associated with the core the holoenzyme is formed, which can initiate transcription.

The catalysed reaction is RNA(n) + a ribonucleoside 5'-triphosphate = RNA(n+1) + diphosphate. Functionally, DNA-dependent RNA polymerase catalyzes the transcription of DNA into RNA using the four ribonucleoside triphosphates as substrates. The protein is DNA-directed RNA polymerase subunit beta of Yersinia pseudotuberculosis serotype O:1b (strain IP 31758).